The sequence spans 72 residues: DNA-directed RNA polymerase subunit Rpo10 (72 aa).

The Zn(2+) site is built by cysteine 7, cysteine 10, cysteine 53, and cysteine 54.

The protein belongs to the archaeal Rpo10/eukaryotic RPB10 RNA polymerase subunit family. In terms of assembly, part of the RNA polymerase complex. The cofactor is Zn(2+).

Its subcellular location is the cytoplasm. It carries out the reaction RNA(n) + a ribonucleoside 5'-triphosphate = RNA(n+1) + diphosphate. Functionally, DNA-dependent RNA polymerase (RNAP) catalyzes the transcription of DNA into RNA using the four ribonucleoside triphosphates as substrates. This chain is DNA-directed RNA polymerase subunit Rpo10, found in Thermoplasma acidophilum (strain ATCC 25905 / DSM 1728 / JCM 9062 / NBRC 15155 / AMRC-C165).